Reading from the N-terminus, the 60-residue chain is uncharacterized protein (60 aa).

This is an uncharacterized protein from Schizosaccharomyces pombe (strain 972 / ATCC 24843) (Fission yeast).